Here is a 306-residue protein sequence, read N- to C-terminus: Aspartate carbamoyltransferase catalytic subunit (306 aa).

Residues Arg54 and Thr55 each contribute to the carbamoyl phosphate site. Lys83 serves as a coordination point for L-aspartate. Positions 104, 132, and 135 each coordinate carbamoyl phosphate. L-aspartate-binding residues include Arg165 and Arg227. The carbamoyl phosphate site is built by Leu266 and Pro267.

The protein belongs to the aspartate/ornithine carbamoyltransferase superfamily. ATCase family. As to quaternary structure, heterododecamer (2C3:3R2) of six catalytic PyrB chains organized as two trimers (C3), and six regulatory PyrI chains organized as three dimers (R2).

The enzyme catalyses carbamoyl phosphate + L-aspartate = N-carbamoyl-L-aspartate + phosphate + H(+). It functions in the pathway pyrimidine metabolism; UMP biosynthesis via de novo pathway; (S)-dihydroorotate from bicarbonate: step 2/3. Its function is as follows. Catalyzes the condensation of carbamoyl phosphate and aspartate to form carbamoyl aspartate and inorganic phosphate, the committed step in the de novo pyrimidine nucleotide biosynthesis pathway. The chain is Aspartate carbamoyltransferase catalytic subunit from Clostridium kluyveri (strain NBRC 12016).